The chain runs to 473 residues: Cysteine--tRNA ligase (473 aa).

C30 contributes to the Zn(2+) binding site. The short motif at 32 to 42 (MTVYDYCHIGH) is the 'HIGH' region element. The Zn(2+) site is built by C213, H238, and E242. A 'KMSKS' region motif is present at residues 270–274 (KMSKS). ATP is bound at residue K273.

It belongs to the class-I aminoacyl-tRNA synthetase family. In terms of assembly, monomer. Zn(2+) is required as a cofactor.

It is found in the cytoplasm. The catalysed reaction is tRNA(Cys) + L-cysteine + ATP = L-cysteinyl-tRNA(Cys) + AMP + diphosphate. The polypeptide is Cysteine--tRNA ligase (Acinetobacter baumannii (strain SDF)).